Consider the following 472-residue polypeptide: Phosphoenolpyruvate carboxykinase (ATP), glycosomal (472 aa).

Position 221 to 228 (221 to 228) interacts with ATP; it reads GLSGTGKT.

The protein belongs to the phosphoenolpyruvate carboxykinase (ATP) family. Homodimer.

Its subcellular location is the glycosome. The enzyme catalyses oxaloacetate + ATP = phosphoenolpyruvate + ADP + CO2. Its pathway is carbohydrate biosynthesis; gluconeogenesis. In Trypanosoma cruzi, this protein is Phosphoenolpyruvate carboxykinase (ATP), glycosomal (PEPCK).